A 194-amino-acid polypeptide reads, in one-letter code: NADH-quinone oxidoreductase subunit B (194 aa).

[4Fe-4S] cluster-binding residues include Cys-73, Cys-74, Cys-138, and Cys-168.

This sequence belongs to the complex I 20 kDa subunit family. As to quaternary structure, NDH-1 is composed of 14 different subunits. Subunits NuoB, C, D, E, F, and G constitute the peripheral sector of the complex. [4Fe-4S] cluster serves as cofactor.

Its subcellular location is the cell inner membrane. The catalysed reaction is a quinone + NADH + 5 H(+)(in) = a quinol + NAD(+) + 4 H(+)(out). NDH-1 shuttles electrons from NADH, via FMN and iron-sulfur (Fe-S) centers, to quinones in the respiratory chain. The immediate electron acceptor for the enzyme in this species is believed to be ubiquinone. Couples the redox reaction to proton translocation (for every two electrons transferred, four hydrogen ions are translocated across the cytoplasmic membrane), and thus conserves the redox energy in a proton gradient. The protein is NADH-quinone oxidoreductase subunit B of Bradyrhizobium sp. (strain BTAi1 / ATCC BAA-1182).